The sequence spans 490 residues: Prostaglandin E2 receptor EP4 subtype (490 aa).

The Extracellular portion of the chain corresponds to 1 to 19; sequence MSTPGVNASASLSPDRLNS. Asn-7 carries an N-linked (GlcNAc...) asparagine glycan. Residues 20–43 traverse the membrane as a helical segment; it reads PVTIPAVMFIFGVVGNLVAIVVLC. At 44-55 the chain is on the cytoplasmic side; the sequence is KSRKEQKETTFY. A helical membrane pass occupies residues 56 to 79; the sequence is TLVCGLAVTDLLGTLLVSPVTIAT. Over 80–96 the chain is Extracellular; the sequence is YMKGQWPGGQPLCEYST. Cys-92 and Cys-170 are joined by a disulfide. A helical transmembrane segment spans residues 97–115; the sequence is FILLFFSLSGLSIICAMSV. Topologically, residues 116-135 are cytoplasmic; it reads ERYLAINHAYFYSHYVDKRL. The chain crosses the membrane as a helical span at residues 136–160; sequence AGLTLFAVYASNVLFCALPNMGLGS. The Extracellular portion of the chain corresponds to 161-184; sequence SRLQYPDTWCFIDWTTNVTAHAAY. The helical transmembrane segment at 185–211 threads the bilayer; the sequence is SYMYAGFSSFLILATVLCNVLVCGALL. The Cytoplasmic segment spans residues 212–269; the sequence is RMHRQFMRRTSLGTEQHHAAAAAVTSVASRGHPAASPALPRLSDFRRRRSFRRIAGAE. Residues 270–297 traverse the membrane as a helical segment; that stretch reads IQMVILLIATSLVVLICSIPLVVRVFVN. Residues 298-314 lie on the Extracellular side of the membrane; sequence QLYQPSLEREVSKNPDL. A helical membrane pass occupies residues 315-334; the sequence is QAIRIASVNPILDPWIYILL. Topologically, residues 335–490 are cytoplasmic; sequence RKTVLSKAIE…ETLNLSEKCI (156 aa). A disordered region spans residues 359-378; sequence ERSGQHCSDSQRTSSAMSGH. The span at 363-378 shows a compositional bias: polar residues; sequence QHCSDSQRTSSAMSGH. A phosphoserine mark is found at Ser-376, Ser-379, Ser-381, and Ser-384. Residues 439–451 show a composition bias toward polar residues; sequence SETSDSSQGQDSE. The disordered stretch occupies residues 439–477; the sequence is SETSDSSQGQDSESVLLVDEAGGSGRAGPAPKGSSLQVT.

The protein belongs to the G-protein coupled receptor 1 family. As to quaternary structure, interacts with FEM1A. Phosphorylation mediates agonist-mediated desensitization by promoting cytoplasmic retention.

It is found in the cell membrane. Receptor for prostaglandin E2 (PGE2). The activity of this receptor is mediated by G(s) proteins that stimulate adenylate cyclase. Has a relaxing effect on smooth muscle. May play an important role in regulating renal hemodynamics, intestinal epithelial transport, adrenal aldosterone secretion, and uterine function. The protein is Prostaglandin E2 receptor EP4 subtype (PTGER4) of Pan troglodytes (Chimpanzee).